A 979-amino-acid polypeptide reads, in one-letter code: Putative cellulose synthase-like protein D6 (979 aa).

The segment at 1–24 is disordered; sequence MMDGESPLRHPRISHVSNSGSDFG. A compositionally biased stretch (low complexity) spans 14 to 24; it reads SHVSNSGSDFG. A run of 2 helical transmembrane segments spans residues 116–136 and 147–167; these read IIIA…ALFL and ALWL…SWLL. Active-site residues include D247 and D683. Transmembrane regions (helical) follow at residues 765-785, 788-808, 837-857, 882-902, 913-933, and 946-966; these read IFIL…HFVV, LTGS…GLAV, LVAV…SFTL, ALMI…LFAV, WSNL…MYPF, and TVVY…YITI.

This sequence belongs to the glycosyltransferase 2 family. Plant cellulose synthase-like D subfamily.

It localises to the golgi apparatus membrane. In terms of biological role, thought to be a Golgi-localized beta-glycan synthase that polymerize the backbones of noncellulosic polysaccharides (hemicelluloses) of plant cell wall. The sequence is that of Putative cellulose synthase-like protein D6 (CSLD6) from Arabidopsis thaliana (Mouse-ear cress).